We begin with the raw amino-acid sequence, 671 residues long: Putative glycoside hydrolase BT_3595 (671 aa).

Residues 1 to 24 form the signal peptide; the sequence is MITGIISILCYLQCFGTLSASVTA.

The protein belongs to the glycoside hydrolase-like 3 (GHL3) family.

The chain is Putative glycoside hydrolase BT_3595 from Bacteroides thetaiotaomicron (strain ATCC 29148 / DSM 2079 / JCM 5827 / CCUG 10774 / NCTC 10582 / VPI-5482 / E50).